Reading from the N-terminus, the 218-residue chain is MEFQKIHFQKAHFLISAPDIRHLDKHLPPESGIEIAFAGRSNAGKSSALNRLTRQKGLARTSKTPGRTQLINVFEIEEGKRLIDLPGYGFAKVPLAMKLKWQKSLGEYLQERESLKGLVVLMDIRQPFKELDQQLIYWAIDADIPVLALLTKADKLKQGARKTTLLKMREEAKNFEGDVQVELFSSLKGIGLEMLEQKVTSWYAQGETPSTALDEISI.

The EngB-type G domain occupies 31–205 (SGIEIAFAGR…EQKVTSWYAQ (175 aa)). GTP-binding positions include 39 to 46 (GRSNAGKS), 66 to 70 (GRTQL), 84 to 87 (DLPG), 151 to 154 (TKAD), and 184 to 186 (FSS). Ser-46 and Thr-68 together coordinate Mg(2+).

Belongs to the TRAFAC class TrmE-Era-EngA-EngB-Septin-like GTPase superfamily. EngB GTPase family. It depends on Mg(2+) as a cofactor.

Its function is as follows. Necessary for normal cell division and for the maintenance of normal septation. This Psychromonas ingrahamii (strain DSM 17664 / CCUG 51855 / 37) protein is Probable GTP-binding protein EngB.